The sequence spans 446 residues: Serine--tRNA ligase, mitochondrial (446 aa).

Residue 251–253 participates in L-serine binding; it reads TAE. ATP-binding positions include 284–286 and valine 300; that span reads RAE. Glutamate 307 lines the L-serine pocket. 371–374 contacts ATP; sequence EISS. Threonine 407 is a binding site for L-serine.

This sequence belongs to the class-II aminoacyl-tRNA synthetase family. Type-1 seryl-tRNA synthetase subfamily. Homodimer. The tRNA molecule binds across the dimer.

Its subcellular location is the mitochondrion matrix. The catalysed reaction is tRNA(Ser) + L-serine + ATP = L-seryl-tRNA(Ser) + AMP + diphosphate + H(+). Functionally, catalyzes the attachment of serine to tRNA(Ser). In Saccharomyces cerevisiae (strain ATCC 204508 / S288c) (Baker's yeast), this protein is Serine--tRNA ligase, mitochondrial (DIA4).